Here is a 358-residue protein sequence, read N- to C-terminus: Trace amine-associated receptor 7e (358 aa).

The Extracellular portion of the chain corresponds to 1-47; it reads MATDDASFPWDQDSILSRDLLSALSSQLCYENLNRSCIRSPYSPGPR. The N-linked (GlcNAc...) asparagine glycan is linked to N34. Cystine bridges form between C37–C201 and C120–C205. Residues 48–68 form a helical membrane-spanning segment; the sequence is LILHAVFGFSAVLAVCGNLLV. Over 69–83 the chain is Cytoplasmic; that stretch reads MTSILHFRQLHSPAN. A helical membrane pass occupies residues 84–104; the sequence is FLVASLACADLLVGLTVMPFS. The Extracellular segment spans residues 105–121; the sequence is MVRSVEGCWYFGDIYCK. Residues 122 to 143 traverse the membrane as a helical segment; that stretch reads FHSSFDVSFCYSSIFHLCFISV. Residues 144–166 lie on the Cytoplasmic side of the membrane; it reads DRYIAVSDPLIYLTRFTASVSGK. The chain crosses the membrane as a helical span at residues 167–187; sequence CITFSWFLSIIYSFSLLYTGA. At 188 to 212 the chain is on the extracellular side; sequence SEAGLEDLVSALTCVGGCQLAVNQS. N210 carries an N-linked (GlcNAc...) asparagine glycan. Residues 213 to 233 traverse the membrane as a helical segment; the sequence is WVFINFLLFLVPTLVMMTVYS. The Cytoplasmic segment spans residues 234–274; sequence KVFLIAKQQAQNIEKIGKQTARASESYKDRVAKRERKAAKT. The chain crosses the membrane as a helical span at residues 275 to 295; sequence LGITVAAFLLSWLPYFIDSII. Residues 296–309 lie on the Extracellular side of the membrane; the sequence is DAFLGFITPTYVYE. The chain crosses the membrane as a helical span at residues 310–333; it reads ILVWIAYYNSAMNPLIYAFFYPWF. The Cytoplasmic segment spans residues 334–358; it reads RKAIKLIVTGKILRENSSATNLFPE.

The protein belongs to the G-protein coupled receptor 1 family.

The protein resides in the cell membrane. Its function is as follows. Olfactory receptor specific for N,N-dimethylalkylamines trace amines. Trace amine compounds are enriched in animal body fluids and act on trace amine-associated receptors (TAARs) to elicit both intraspecific and interspecific innate behaviors. Ligand-binding causes a conformation change that triggers signaling via G(s)-class of G alpha proteins (GNAL or GNAS). The sequence is that of Trace amine-associated receptor 7e from Rattus norvegicus (Rat).